Consider the following 998-residue polypeptide: DNA damage-induced apoptosis suppressor protein (998 aa).

Residues Asp-815–Ile-834 are disordered. Positions Gln-817–Ile-834 are enriched in polar residues.

In terms of tissue distribution, highly expressed in colorectal and lung cancer tissues.

It localises to the cytoplasm. The protein resides in the nucleus. Functionally, may be an anti-apoptotic protein involved in DNA repair or cell survival. In Homo sapiens (Human), this protein is DNA damage-induced apoptosis suppressor protein (DDIAS).